A 97-amino-acid polypeptide reads, in one-letter code: Large ribosomal subunit protein bL27 (97 aa).

The propeptide occupies 1-9 (MFTFDLQLF).

This sequence belongs to the bacterial ribosomal protein bL27 family. In terms of processing, the N-terminus is cleaved by ribosomal processing cysteine protease Prp.

In Syntrophomonas wolfei subsp. wolfei (strain DSM 2245B / Goettingen), this protein is Large ribosomal subunit protein bL27.